Consider the following 298-residue polypeptide: Inosose dehydratase (298 aa).

The protein belongs to the IolE/MocC family. Requires glutathione as cofactor. The cofactor is Co(2+). Mn(2+) is required as a cofactor.

It carries out the reaction scyllo-inosose = 3D-3,5/4-trihydroxycyclohexane-1,2-dione + H2O. Its pathway is polyol metabolism; myo-inositol degradation into acetyl-CoA; acetyl-CoA from myo-inositol: step 2/7. In terms of biological role, catalyzes the dehydration of inosose (2-keto-myo-inositol, 2KMI or 2,4,6/3,5-pentahydroxycyclohexanone) to 3D-(3,5/4)-trihydroxycyclohexane-1,2-dione (D-2,3-diketo-4-deoxy-epi-inositol). This chain is Inosose dehydratase, found in Clostridium botulinum (strain Alaska E43 / Type E3).